A 210-amino-acid polypeptide reads, in one-letter code: Somatotropin-2 (210 aa).

The N-terminal stretch at 1–22 is a signal peptide; that stretch reads MGQVFLLMPVLLVSCFLGQGAA. His38 serves as a coordination point for Zn(2+). Cys71 and Cys183 are oxidised to a cystine. Glu192 contributes to the Zn(2+) binding site. Cys200 and Cys208 are disulfide-bonded.

The protein belongs to the somatotropin/prolactin family.

The protein resides in the secreted. Functionally, growth hormone plays an important role in growth control and is involved in the regulation of several anabolic processes. Implicated as an osmoregulatory substance important for seawater adaptation. The chain is Somatotropin-2 (gh2) from Oncorhynchus mykiss (Rainbow trout).